A 256-amino-acid chain; its full sequence is Indole-3-glycerol phosphate synthase (256 aa).

The protein belongs to the TrpC family.

It catalyses the reaction 1-(2-carboxyphenylamino)-1-deoxy-D-ribulose 5-phosphate + H(+) = (1S,2R)-1-C-(indol-3-yl)glycerol 3-phosphate + CO2 + H2O. It functions in the pathway amino-acid biosynthesis; L-tryptophan biosynthesis; L-tryptophan from chorismate: step 4/5. This Pelodictyon phaeoclathratiforme (strain DSM 5477 / BU-1) protein is Indole-3-glycerol phosphate synthase.